The sequence spans 373 residues: Pectin lyase D (373 aa).

An N-terminal signal peptide occupies residues 1–19 (MKYAAALTAIAALAARAAA). Disulfide bonds link C82–C101 and C91–C225. Residue N128 is glycosylated (N-linked (GlcNAc...) asparagine). The active site involves R255. N274 is a glycosylation site (N-linked (GlcNAc...) asparagine). A disulfide bridge links C321 with C329. Residue N348 is glycosylated (N-linked (GlcNAc...) asparagine). Residues 354-366 (LPSADAASTSPAS) show a composition bias toward low complexity. The interval 354-373 (LPSADAASTSPASNAGQGNL) is disordered.

The protein belongs to the polysaccharide lyase 1 family. In terms of processing, may be O-glycosylated; does not contain N-acetylglucosamine.

Its subcellular location is the secreted. It carries out the reaction Eliminative cleavage of (1-&gt;4)-alpha-D-galacturonan methyl ester to give oligosaccharides with 4-deoxy-6-O-methyl-alpha-D-galact-4-enuronosyl groups at their non-reducing ends.. In terms of biological role, pectinolytic enzymes consist of four classes of enzymes: pectin lyase, polygalacturonase, pectin methylesterase and rhamnogalacturonase. Among pectinolytic enzymes, pectin lyase is the most important in depolymerization of pectin, since it cleaves internal glycosidic bonds of highly methylated pectins. In Aspergillus niger, this protein is Pectin lyase D (pelD).